Here is a 747-residue protein sequence, read N- to C-terminus: E3 UFM1-protein ligase 1 homolog (747 aa).

Positions 403–468 (EKKKQCGSKA…GTVQVNSEEL (66 aa)) are disordered. The segment covering 429–438 (GGKGGKKGGK) has biased composition (basic residues). A compositionally biased stretch (gly residues) spans 439–449 (GGKNGGGGGKG). Polar residues predominate over residues 450-465 (ATSSVPTGSGTVQVNS).

It belongs to the UFL1 family.

Functionally, E3 UFM1-protein ligase that mediates ufmylation of target proteins. The sequence is that of E3 UFM1-protein ligase 1 homolog (ufl-1) from Caenorhabditis briggsae.